A 425-amino-acid polypeptide reads, in one-letter code: MASEERDGDVLLQLHPEEVVETDPQLPEEIERCSGLDYNDFFWRYMHKNIPVIIANVSNDWECQNWTVGQSSPESRDLNSNPSASSINFDYLKTKISDGPVPVANCNSSYFNSHTKLELNFHDYLAKWRSSIESQSSAAWTSAEVNSNVAPASGDNLYLKDWHLAAQMPGYNFYKVPKYFASDWLNEQLIQQGKDDYRFVYMGPKNSWTSYHADVFGSFSWSTNIVGLKKWLIMPPGEELKLNDRLGNLPFSIDEKMLDEHNVRYYTINQRANEAVFVPSGWFHQVWNLTDTISVNHNWFNGCNISMVWQNLKNNLKAVCNEISDCQQMDNFEAHCQTMLRASFGINYLDFIELLEFIAARRLAEGTVATKFLLFDSYTMNDYHVQYDLECLWKITRTLTEDPTIQCSPLQLEDRCQGLLARLEF.

In terms of domain architecture, JmjC spans 165 to 316 (AAQMPGYNFY…MVWQNLKNNL (152 aa)). Fe cation is bound by residues H212, D214, and H284.

The protein belongs to the JMJD6 family. Fe(2+) serves as cofactor.

The protein localises to the nucleus. The protein resides in the cytoplasm. The catalysed reaction is L-lysyl-[protein] + 2-oxoglutarate + O2 = 4-hydroxy-L-lysyl-[protein] + succinate + CO2. In terms of biological role, catalyzes the 2-oxoglutarate and iron-dependent C4-lysyl hydroxylation of eRF1 thereby promoting the translational termination efficiency of eRF1. May be involved in regulation of chromatin structure, promoting expansion of heterochromatin. The polypeptide is 2-oxoglutarate and iron-dependent oxygenase JMJD4 homolog (Drosophila melanogaster (Fruit fly)).